Consider the following 157-residue polypeptide: Transcription elongation factor GreA (157 aa).

Residues 1-24 (MDKFPMTPEGYHALDEELKRRQQE) form a disordered region. The segment covering 12 to 24 (HALDEELKRRQQE) has biased composition (basic and acidic residues). A coiled-coil region spans residues 53–73 (EAQSLNEGRIAELEDKLSRAE).

It belongs to the GreA/GreB family.

Its function is as follows. Necessary for efficient RNA polymerase transcription elongation past template-encoded arresting sites. The arresting sites in DNA have the property of trapping a certain fraction of elongating RNA polymerases that pass through, resulting in locked ternary complexes. Cleavage of the nascent transcript by cleavage factors such as GreA or GreB allows the resumption of elongation from the new 3'terminus. GreA releases sequences of 2 to 3 nucleotides. The polypeptide is Transcription elongation factor GreA (Beijerinckia indica subsp. indica (strain ATCC 9039 / DSM 1715 / NCIMB 8712)).